The chain runs to 360 residues: Phosphoserine aminotransferase (360 aa).

Residue Arg-42 participates in L-glutamate binding. Pyridoxal 5'-phosphate-binding positions include 76 to 77, Trp-102, Thr-152, Asp-172, and Gln-195; that span reads AR. An N6-(pyridoxal phosphate)lysine modification is found at Lys-196. Residue 237 to 238 coordinates pyridoxal 5'-phosphate; the sequence is NT.

This sequence belongs to the class-V pyridoxal-phosphate-dependent aminotransferase family. SerC subfamily. As to quaternary structure, homodimer. Pyridoxal 5'-phosphate serves as cofactor.

It is found in the cytoplasm. It catalyses the reaction O-phospho-L-serine + 2-oxoglutarate = 3-phosphooxypyruvate + L-glutamate. The enzyme catalyses 4-(phosphooxy)-L-threonine + 2-oxoglutarate = (R)-3-hydroxy-2-oxo-4-phosphooxybutanoate + L-glutamate. It functions in the pathway amino-acid biosynthesis; L-serine biosynthesis; L-serine from 3-phospho-D-glycerate: step 2/3. It participates in cofactor biosynthesis; pyridoxine 5'-phosphate biosynthesis; pyridoxine 5'-phosphate from D-erythrose 4-phosphate: step 3/5. Catalyzes the reversible conversion of 3-phosphohydroxypyruvate to phosphoserine and of 3-hydroxy-2-oxo-4-phosphonooxybutanoate to phosphohydroxythreonine. In Pasteurella multocida (strain Pm70), this protein is Phosphoserine aminotransferase.